Here is a 484-residue protein sequence, read N- to C-terminus: Zinc metalloproteinase-disintegrin stejnitin (484 aa).

Residues 1 to 20 (MIQVLLVTICLAVFPYQGNS) form the signal peptide. A propeptide spanning residues 21-192 (IILESGNVND…ASQLNLTPDE (172 aa)) is cleaved from the precursor. A Pyrrolidone carboxylic acid modification is found at glutamine 193. Residues 194–392 (RFIELVIVAD…YTSRCLYNGP (199 aa)) enclose the Peptidase M12B domain. Position 197 (glutamate 197) interacts with Ca(2+). The N-linked (GlcNAc...) asparagine glycan is linked to asparagine 254. Residue aspartate 281 participates in Ca(2+) binding. 3 disulfides stabilise this stretch: cysteine 305–cysteine 387, cysteine 345–cysteine 369, and cysteine 347–cysteine 352. Zn(2+)-binding residues include histidine 330, histidine 334, and histidine 340. Residues cysteine 387, asparagine 390, valine 402, asparagine 405, glutamate 409, glutamate 412, and aspartate 415 each contribute to the Ca(2+) site. The 85-residue stretch at 400–484 (PPVCGNYYVE…GDCPRNPFRA (85 aa)) folds into the Disintegrin domain. Intrachain disulfides connect cysteine 403–cysteine 422, cysteine 414–cysteine 432, cysteine 416–cysteine 427, cysteine 426–cysteine 449, cysteine 440–cysteine 446, cysteine 445–cysteine 470, and cysteine 458–cysteine 477. The Cell attachment site motif lies at 462–464 (KGD).

It belongs to the venom metalloproteinase (M12B) family. P-II subfamily. P-IIb sub-subfamily. Requires Zn(2+) as cofactor. The N-terminus is blocked. Expressed by the venom gland.

The protein localises to the secreted. Snake venom zinc metalloproteinase that inhibits ADP-induced platelet aggregation in human platelet-rich plasma (IC(50) is 175 nM) and cleaves alpha-(FGA) and subsequently the beta-chain (FGG) of bovine fibrinogen, leaving the gamma-chain unaffected. It is also able to inhibit proliferatin of ECV304 cells by inducing apoptosis of these cells. This Trimeresurus stejnegeri (Chinese green tree viper) protein is Zinc metalloproteinase-disintegrin stejnitin.